A 1296-amino-acid polypeptide reads, in one-letter code: Capping protein, Arp2/3 and myosin-I linker protein 2 (1296 aa).

LRR repeat units follow at residues 63 to 87, 88 to 110, 248 to 271, 273 to 296, 305 to 328, 363 to 386, 395 to 415, 426 to 448, 453 to 477, 480 to 506, 515 to 538, 542 to 565, 570 to 594, 598 to 621, and 836 to 859; these read DCTFSYLEVQAMALQETPPRVTFEL, ESLPELVLEFPCVAALEQLAQHV, ELVLEACGLRGDFVRRLAQALAGH, NSGLRELSLSGNLLDDRGMRALGR, DSTLTHLDLSGNPGALGPSQDSGG, CSSLTHLEASRNIFSRMKSQAAPA, TRMLRHLGLAGCKLPPEALRA, IHDLHLDLSACELRSVGAQVIQD, AGALSSLDLSDNGFGSDMVTLVLAI, SRSLKHVALGRNFNVRCKETLDDVLHR, DCPLQSLSVAESRLKQGASILIRA, NPKLTALDISGNAIGDAGAKMLAK, NTRLRSVIWDRNNTSALGLLDVAQA, NHSLKSMPLPLNDVTQAHRSRPEL, and TMAPAVPPLGGNELSPLETGGLEE. Residues 507–601 form a tropomodulin-like region; sequence IAQLMQDDDC…AQALEQNHSL (95 aa). The segment at 975 to 1002 is necessary for localization at the cell membrane; sequence ATPVPRTLRKKLGTLFAFKKPRSTRGPR. The segment at 988 to 1296 is disordered; the sequence is TLFAFKKPRS…TDQRGGGPNP (309 aa). Serine 1008 is modified (phosphoserine). Composition is skewed to basic and acidic residues over residues 1079-1091 and 1118-1134; these read RPDKRRPLERGDT and ESKRKQSKDGEIKKAGS. The residue at position 1134 (serine 1134) is a Phosphoserine. Phosphothreonine is present on threonine 1145. The segment covering 1176–1185 has biased composition (polar residues); it reads TWKTLGQQLN. At arginine 1191 the chain carries Omega-N-methylarginine. 2 stretches are compositionally biased toward pro residues: residues 1199 to 1209 and 1267 to 1285; these read PGPPSPCPSPS and PLPPYPTEPSSPERSPPSP. 2 positions are modified to phosphoserine: serine 1203 and serine 1281.

Belongs to the CARMIL family. As to quaternary structure, forms homodimers. Interacts (via C-terminus) with heterodimeric capping protein (CP); the interaction inhibits CP activity and hence promotes actin polymerization at the barbed end of actin filaments.

Its subcellular location is the cytoplasm. The protein resides in the cytoskeleton. It is found in the cell membrane. The protein localises to the cell projection. It localises to the lamellipodium. Its subcellular location is the ruffle. In terms of biological role, cell membrane-cytoskeleton-associated protein that plays a role in the regulation of actin polymerization at the barbed end of actin filaments. Prevents F-actin heterodimeric capping protein (CP) activity at the leading edges of migrating cells, and hence generates uncapped barbed ends and enhances actin polymerization. Plays a role in cell protrusion formations; involved in cell polarity, lamellipodial assembly, membrane ruffling and macropinosome formations. Involved as well in cell migration and invadopodia formation during wound healing. Required for CD28-mediated stimulation of NF-kappa-B signaling, involved in naive T cells activation, maturation into T memory cells, and differentiation into T helper cells. Required for CD28-mediated differentiation of T regulatory cells. The sequence is that of Capping protein, Arp2/3 and myosin-I linker protein 2 from Mus musculus (Mouse).